Consider the following 437-residue polypeptide: Phosphoglucosamine mutase (437 aa).

Ser-101 serves as the catalytic Phosphoserine intermediate. Residues Ser-101, Asp-234, Asp-236, and Asp-238 each contribute to the Mg(2+) site. Position 101 is a phosphoserine (Ser-101).

It belongs to the phosphohexose mutase family. The cofactor is Mg(2+). Post-translationally, activated by phosphorylation.

It carries out the reaction alpha-D-glucosamine 1-phosphate = D-glucosamine 6-phosphate. In terms of biological role, catalyzes the conversion of glucosamine-6-phosphate to glucosamine-1-phosphate. The protein is Phosphoglucosamine mutase of Thermus thermophilus (strain ATCC BAA-163 / DSM 7039 / HB27).